Consider the following 479-residue polypeptide: POU domain, class 2, transcription factor 2 (479 aa).

Disordered regions lie at residues 1–86 (MVHS…AQPH), 166–200 (TQAV…PSDL), 275–298 (SSLP…GRRR), 357–393 (PCSA…SQAS), and 409–479 (TLHP…PYQP). The span at 12–37 (RMSKPLEAEKQGLDSPSEHTDTERNG) shows a compositional bias: basic and acidic residues. The segment covering 38–60 (PDTNHQNPQNKTSPFSVSPTGPS) has biased composition (polar residues). Residues 76–85 (APLPPQPAQP) are compositionally biased toward pro residues. A POU-specific domain is found at 195–269 (EEPSDLEELE…LLEKWLNDAE (75 aa)). The segment covering 275-288 (SSLPSPNQLSSPSL) has biased composition (low complexity). Positions 297–356 (RRKKRTSIETNVRFALEKSFLANQKPTSEEILLIAEQLHMEKEVIRVWFCNRRQKEKRIN) form a DNA-binding region, homeobox. The interval 389-410 (LSQASSSLSTTVTTLSSAVGTL) is leucine-zipper. Residues 416-425 (AGGGGGGGGA) show a composition bias toward gly residues.

It belongs to the POU transcription factor family. Class-2 subfamily. In terms of assembly, interacts with NR3C1, AR and PGR. Interacts with POU2AF1; the interaction increases POU2F2 transactivation activity. As to expression, isoform 3 is B-cell specific. Isoform 5 is expressed in B-cells and the immunoglobulin-expressing T-cell line MOLT-4, but not in the T-cell line BW5147.

The protein localises to the cytoplasm. Its subcellular location is the nucleus. Transactivation activity is enhanced by transcriptional coactivator POU2AF1. In terms of biological role, transcription factor that specifically binds to the octamer motif (5'-ATTTGCAT-3'). Regulates IL6 expression in B cells with POU2AF1. Regulates transcription in a number of tissues in addition to activating immunoglobulin gene expression. Modulates transcription transactivation by NR3C1, AR and PGR. Its function is as follows. Activates the U2 small nuclear RNA (snRNA) promoter. The protein is POU domain, class 2, transcription factor 2 of Homo sapiens (Human).